A 154-amino-acid chain; its full sequence is Large ribosomal subunit protein uL13 (154 aa).

Belongs to the universal ribosomal protein uL13 family. As to quaternary structure, part of the 50S ribosomal subunit.

Functionally, this protein is one of the early assembly proteins of the 50S ribosomal subunit, although it is not seen to bind rRNA by itself. It is important during the early stages of 50S assembly. The chain is Large ribosomal subunit protein uL13 from Bradyrhizobium sp. (strain BTAi1 / ATCC BAA-1182).